The chain runs to 286 residues: 4-hydroxybenzoate octaprenyltransferase (286 aa).

Helical transmembrane passes span 21-40, 95-115, 142-162, 167-187, 210-230, 235-255, and 266-286; these read GTLL…AGGM, ILFV…NGLV, FLGI…TGEV, WWLF…YAMV, QIIG…GWSA, LYGL…MLIF, and FLNN…DYLI.

Belongs to the UbiA prenyltransferase family. It depends on Mg(2+) as a cofactor.

It is found in the cell inner membrane. It catalyses the reaction all-trans-octaprenyl diphosphate + 4-hydroxybenzoate = 4-hydroxy-3-(all-trans-octaprenyl)benzoate + diphosphate. It functions in the pathway cofactor biosynthesis; ubiquinone biosynthesis. Its function is as follows. Catalyzes the prenylation of para-hydroxybenzoate (PHB) with an all-trans polyprenyl group. Mediates the second step in the final reaction sequence of ubiquinone-8 (UQ-8) biosynthesis, which is the condensation of the polyisoprenoid side chain with PHB, generating the first membrane-bound Q intermediate 3-octaprenyl-4-hydroxybenzoate. In Shewanella baltica (strain OS185), this protein is 4-hydroxybenzoate octaprenyltransferase.